Here is a 100-residue protein sequence, read N- to C-terminus: Conantokin-G (100 aa).

Positions 1-21 (MHLYTYLYLLVPLVTFHLILG) are cleaved as a signal peptide. Positions 22-80 (TGTLDDGGALTERRSADATALKAEPVLLQKSAARSTDDNGKDRLTQMKRILKQRGNKAR) are excised as a propeptide. The disordered stretch occupies residues 52–100 (SAARSTDDNGKDRLTQMKRILKQRGNKARGEEELQENQELIREKSNGKR). Residues 56–66 (STDDNGKDRLT) are compositionally biased toward basic and acidic residues. The segment at 61-80 (GKDRLTQMKRILKQRGNKAR) is gamma-carboxylation recognition sequence that plays a role in the conversion of Glu to carboxy-Glu (Gla). Residue Glu83 participates in a divalent metal cation binding. 4-carboxyglutamate occurs at positions 83, 84, 87, 90, and 94. 3 residues coordinate a divalent metal cation: Glu87, Glu90, and Glu94. Positions 90 to 100 (ELIREKSNGKR) are enriched in basic and acidic residues. Asn97 carries the post-translational modification Asparagine amide.

The protein belongs to the conotoxin B superfamily. Requires Ca(2+) as cofactor. Mg(2+) serves as cofactor. Expressed by the venom duct.

It localises to the secreted. In terms of biological role, conantokins inhibit N-methyl-D-aspartate (NMDA) receptors. This toxin is selective for the NR2B/GRIN2B subunit. Induces sleep-like symptoms in young mice and hyperactivity in older mice. This Conus geographus (Geography cone) protein is Conantokin-G.